A 938-amino-acid polypeptide reads, in one-letter code: Isoleucine--tRNA ligase (938 aa).

Positions Pro-58 to His-68 match the 'HIGH' region motif. The residue at position 183 (Lys-183) is an N6-acetyllysine. Glu-561 lines the L-isoleucyl-5'-AMP pocket. The 'KMSKS' region signature appears at Lys-602–Ser-606. Lys-605 contacts ATP. Zn(2+) is bound by residues Cys-901, Cys-904, Cys-921, and Cys-924.

Belongs to the class-I aminoacyl-tRNA synthetase family. IleS type 1 subfamily. In terms of assembly, monomer. Requires Zn(2+) as cofactor.

It localises to the cytoplasm. The catalysed reaction is tRNA(Ile) + L-isoleucine + ATP = L-isoleucyl-tRNA(Ile) + AMP + diphosphate. In terms of biological role, catalyzes the attachment of isoleucine to tRNA(Ile). As IleRS can inadvertently accommodate and process structurally similar amino acids such as valine, to avoid such errors it has two additional distinct tRNA(Ile)-dependent editing activities. One activity is designated as 'pretransfer' editing and involves the hydrolysis of activated Val-AMP. The other activity is designated 'posttransfer' editing and involves deacylation of mischarged Val-tRNA(Ile). The polypeptide is Isoleucine--tRNA ligase (Escherichia coli O127:H6 (strain E2348/69 / EPEC)).